The sequence spans 59 residues: ADNHARVAGPRAVASGRYATEKAFLQMMTRGSCGLPCHENRRCGWACYCDDGICKPLRV.

Positions Ala-1–Arg-30 are excised as a propeptide.

Post-translationally, contains 3 disulfide bonds. In terms of tissue distribution, expressed by the venom duct.

The protein resides in the secreted. Crassispirid snail peptide that induces sleep-like symptoms in young mice (12 and 14 days) and hyperactivity in older mice (16 days), when intracranially injected. This chain is Crassipeptide cce9a, found in Crassispira cerithina (Sea snail).